We begin with the raw amino-acid sequence, 391 residues long: Phosphoglycerate kinase (391 aa).

Substrate is bound by residues 21-23 (DLN), Arg-36, 59-62 (HLGR), Arg-113, and Arg-146. Residues Lys-197, Glu-319, and 345–348 (GGDT) contribute to the ATP site.

This sequence belongs to the phosphoglycerate kinase family. As to quaternary structure, monomer.

The protein localises to the cytoplasm. The catalysed reaction is (2R)-3-phosphoglycerate + ATP = (2R)-3-phospho-glyceroyl phosphate + ADP. The protein operates within carbohydrate degradation; glycolysis; pyruvate from D-glyceraldehyde 3-phosphate: step 2/5. The protein is Phosphoglycerate kinase of Pseudoalteromonas translucida (strain TAC 125).